The following is a 435-amino-acid chain: 5-methylthioadenosine/S-adenosylhomocysteine deaminase (435 aa).

His-65 and His-67 together coordinate Zn(2+). Residues Glu-94, Arg-150, and His-189 each coordinate substrate. His-216 contributes to the Zn(2+) binding site. Substrate-binding residues include Glu-219 and Asp-304. Asp-304 lines the Zn(2+) pocket.

The protein belongs to the metallo-dependent hydrolases superfamily. MTA/SAH deaminase family. It depends on Zn(2+) as a cofactor.

It catalyses the reaction S-adenosyl-L-homocysteine + H2O + H(+) = S-inosyl-L-homocysteine + NH4(+). The enzyme catalyses S-methyl-5'-thioadenosine + H2O + H(+) = S-methyl-5'-thioinosine + NH4(+). Catalyzes the deamination of 5-methylthioadenosine and S-adenosyl-L-homocysteine into 5-methylthioinosine and S-inosyl-L-homocysteine, respectively. Is also able to deaminate adenosine. In Bacillus cereus (strain AH187), this protein is 5-methylthioadenosine/S-adenosylhomocysteine deaminase.